A 310-amino-acid chain; its full sequence is MSTSSYIDQIKNEISEKVKGRAIIAVSGGQDSSLLSVLASQVLGDRLLCVFVDTGLIRIGEVDRVRKFFEEHAMNYRIVDASKRFLEALKGITDPEEKRKIIGKMFIDVLNEEAENFHAEYLLQGTIAPDWIESGGQKRDTIKSHHNVGGLPKEMKLKLVEPLRDFYKDEIRAMSRELGLRTDLQPFPGPGLAVRIVGEITPEKLDLLRRATRIVEDKIESALKPEERPWQYFAVLLPVKTTGVHGDRRAYGYTVAVRMIDSIDAMTGTFTKPSWDLLEDIANTITDEIPDINRVVYDITNKPPATIEWE.

Residues 1 to 187 (MSTSSYIDQI…LGLRTDLQPF (187 aa)) form the GMPS ATP-PPase domain. Residue 27–33 (SGGQDSS) coordinates ATP.

Heterodimer composed of a glutamine amidotransferase subunit (A) and a GMP-binding subunit (B).

The catalysed reaction is XMP + L-glutamine + ATP + H2O = GMP + L-glutamate + AMP + diphosphate + 2 H(+). It participates in purine metabolism; GMP biosynthesis; GMP from XMP (L-Gln route): step 1/1. Its function is as follows. Catalyzes the synthesis of GMP from XMP. The chain is GMP synthase [glutamine-hydrolyzing] subunit B (guaAB) from Thermoplasma acidophilum (strain ATCC 25905 / DSM 1728 / JCM 9062 / NBRC 15155 / AMRC-C165).